The primary structure comprises 211 residues: Thiamine-phosphate synthase (211 aa).

4-amino-2-methyl-5-(diphosphooxymethyl)pyrimidine contacts are provided by residues 37 to 41 (QLRIK) and Asn69. Asp70 and Asp89 together coordinate Mg(2+). Ser108 provides a ligand contact to 4-amino-2-methyl-5-(diphosphooxymethyl)pyrimidine. 2-[(2R,5Z)-2-carboxy-4-methylthiazol-5(2H)-ylidene]ethyl phosphate is bound at residue 134–136 (TQT). Residue Lys137 coordinates 4-amino-2-methyl-5-(diphosphooxymethyl)pyrimidine. 2-[(2R,5Z)-2-carboxy-4-methylthiazol-5(2H)-ylidene]ethyl phosphate is bound by residues Gly166 and 186-187 (VS).

Belongs to the thiamine-phosphate synthase family. Mg(2+) is required as a cofactor.

The enzyme catalyses 2-[(2R,5Z)-2-carboxy-4-methylthiazol-5(2H)-ylidene]ethyl phosphate + 4-amino-2-methyl-5-(diphosphooxymethyl)pyrimidine + 2 H(+) = thiamine phosphate + CO2 + diphosphate. The catalysed reaction is 2-(2-carboxy-4-methylthiazol-5-yl)ethyl phosphate + 4-amino-2-methyl-5-(diphosphooxymethyl)pyrimidine + 2 H(+) = thiamine phosphate + CO2 + diphosphate. It catalyses the reaction 4-methyl-5-(2-phosphooxyethyl)-thiazole + 4-amino-2-methyl-5-(diphosphooxymethyl)pyrimidine + H(+) = thiamine phosphate + diphosphate. It functions in the pathway cofactor biosynthesis; thiamine diphosphate biosynthesis; thiamine phosphate from 4-amino-2-methyl-5-diphosphomethylpyrimidine and 4-methyl-5-(2-phosphoethyl)-thiazole: step 1/1. In terms of biological role, condenses 4-methyl-5-(beta-hydroxyethyl)thiazole monophosphate (THZ-P) and 2-methyl-4-amino-5-hydroxymethyl pyrimidine pyrophosphate (HMP-PP) to form thiamine monophosphate (TMP). In Salmonella agona (strain SL483), this protein is Thiamine-phosphate synthase.